Reading from the N-terminus, the 224-residue chain is 3-dehydroquinate dehydratase (224 aa).

Residues 35-37 (EFR) and Arg-65 contribute to the 3-dehydroquinate site. His-120 functions as the Proton donor/acceptor in the catalytic mechanism. The active-site Schiff-base intermediate with substrate is Lys-146. 3 residues coordinate 3-dehydroquinate: Arg-183, Thr-202, and Gln-206.

The protein belongs to the type-I 3-dehydroquinase family. As to quaternary structure, homodimer.

The enzyme catalyses 3-dehydroquinate = 3-dehydroshikimate + H2O. It participates in metabolic intermediate biosynthesis; chorismate biosynthesis; chorismate from D-erythrose 4-phosphate and phosphoenolpyruvate: step 3/7. In terms of biological role, involved in the third step of the chorismate pathway, which leads to the biosynthesis of aromatic amino acids. Catalyzes the cis-dehydration of 3-dehydroquinate (DHQ) and introduces the first double bond of the aromatic ring to yield 3-dehydroshikimate. This Methanobrevibacter smithii (strain ATCC 35061 / DSM 861 / OCM 144 / PS) protein is 3-dehydroquinate dehydratase.